A 250-amino-acid chain; its full sequence is PF03932 family protein CutC (250 aa).

The protein belongs to the CutC family.

The protein localises to the cytoplasm. The polypeptide is PF03932 family protein CutC (Vibrio vulnificus (strain CMCP6)).